The following is a 331-amino-acid chain: Biotin synthase (331 aa).

In terms of domain architecture, Radical SAM core spans 40–269 (YRVQLASLLS…HARVRLSAGR (230 aa)). C55, C59, and C62 together coordinate [4Fe-4S] cluster. Residues C100, C132, C192, and R264 each coordinate [2Fe-2S] cluster.

It belongs to the radical SAM superfamily. Biotin synthase family. In terms of assembly, homodimer. [4Fe-4S] cluster serves as cofactor. [2Fe-2S] cluster is required as a cofactor.

The catalysed reaction is (4R,5S)-dethiobiotin + (sulfur carrier)-SH + 2 reduced [2Fe-2S]-[ferredoxin] + 2 S-adenosyl-L-methionine = (sulfur carrier)-H + biotin + 2 5'-deoxyadenosine + 2 L-methionine + 2 oxidized [2Fe-2S]-[ferredoxin]. The protein operates within cofactor biosynthesis; biotin biosynthesis; biotin from 7,8-diaminononanoate: step 2/2. Catalyzes the conversion of dethiobiotin (DTB) to biotin by the insertion of a sulfur atom into dethiobiotin via a radical-based mechanism. The chain is Biotin synthase from Synechococcus sp. (strain CC9605).